We begin with the raw amino-acid sequence, 428 residues long: Chaperone SurA (428 aa).

The N-terminal stretch at 1–20 (MKNWKTLLLGIAMIANTSFA) is a signal peptide. PpiC domains lie at 171 to 272 (STEL…KVND) and 282 to 382 (VTEV…ELLD).

Its subcellular location is the periplasm. It carries out the reaction [protein]-peptidylproline (omega=180) = [protein]-peptidylproline (omega=0). In terms of biological role, chaperone involved in the correct folding and assembly of outer membrane proteins. Recognizes specific patterns of aromatic residues and the orientation of their side chains, which are found more frequently in integral outer membrane proteins. May act in both early periplasmic and late outer membrane-associated steps of protein maturation. This is Chaperone SurA from Shigella dysenteriae serotype 1 (strain Sd197).